A 320-amino-acid chain; its full sequence is 3-hydroxybenzoate 6-hydroxylase 2 (320 aa).

Residues 1 to 25 (MRSTNTRSARSRPTKRSVNASATPT) are disordered. A compositionally biased stretch (polar residues) spans 16-25 (RSVNASATPT).

This sequence belongs to the 3-hydroxybenzoate 6-hydroxylase family. Requires FAD as cofactor.

It carries out the reaction 3-hydroxybenzoate + NADH + O2 + H(+) = 2,5-dihydroxybenzoate + NAD(+) + H2O. In terms of biological role, catalyzes the conversion of 3-hydroxybenzoate to gentisate. The chain is 3-hydroxybenzoate 6-hydroxylase 2 (hbzD) from Aquipseudomonas alcaligenes (Pseudomonas alcaligenes).